Consider the following 457-residue polypeptide: uncharacterized protein (457 aa).

Transmembrane regions (helical) follow at residues 15-35, 54-74, 87-107, 112-132, 144-164, 166-186, 205-225, 229-249, 269-289, 308-328, 334-354, 357-377, 400-420, and 428-448; these read YGAILTIVIGISMAVLDGAIA, IWVVNAYQIAIVISLLSFSFL, GLVVFLLSSLFCALSDSLQML, VIQGFGGAALMSVNTALIRLI, INSFIVAVSSAAGPTIAAAIL, IASWKWLFLINVPLGIIALLL, LPSAVMNALTFGLLITALSGF, QSLTLIAAELVVMVVVGIFFI, LFSLSICTSVCSFCAQMLAMV, LLLTPWPLATMVMAPLAGYLI, GLLGALGLFIMAAGLFSLVLL, SPADINIIWPMILCGAGFGLF, MLGTARLLGQSSGAALVALML, and THVSLMAAAILAVIAACVSGL.

The protein belongs to the major facilitator superfamily. TCR/Tet family.

It is found in the cell inner membrane. This is an uncharacterized protein from Escherichia coli (strain K12).